The chain runs to 159 residues: Na(+)/H(+) antiporter subunit E1 (159 aa).

The next 4 helical transmembrane spans lie at 1-21 (MAVQLVLNFIIAVFWLFVTNS), 27-47 (FVLGFIFGLVLVYLLHRVLPG), 49-69 (FYVITLYRIIKLVIIFLIELI), and 101-121 (WQIVLLSNLITLTPGTVVLGV).

Belongs to the CPA3 antiporters (TC 2.A.63) subunit E family. As to quaternary structure, may form a heterooligomeric complex that consists of seven subunits: mnhA1, mnhB1, mnhC1, mnhD1, mnhE1, mnhF1 and mnhG1.

It localises to the cell membrane. In terms of biological role, mnh complex is a Na(+)/H(+) antiporter involved in Na(+) excretion. The sequence is that of Na(+)/H(+) antiporter subunit E1 (mnhE1) from Staphylococcus aureus (strain Mu3 / ATCC 700698).